A 312-amino-acid chain; its full sequence is Zinc transporter ZitB (312 aa).

A run of 5 helical transmembrane segments spans residues 21 to 41, 48 to 68, 90 to 110, 123 to 143, and 164 to 184; these read LLFA…GGIL, LADA…LLVV, AAFV…WEAI, LMMV…WILH, and LLGS…GWTP.

It belongs to the cation diffusion facilitator (CDF) transporter (TC 2.A.4) family. SLC30A subfamily.

It is found in the cell inner membrane. In terms of biological role, involved in zinc efflux across the cytoplasmic membrane, thus reducing zinc accumulation in the cytoplasm and rendering bacteria more resistant to zinc. It may contribute to zinc homeostasis at low concentrations of zinc. This chain is Zinc transporter ZitB, found in Salmonella typhi.